A 235-amino-acid polypeptide reads, in one-letter code: MFFFPKLRKLIGSTVIDHDTKNSSGKEEIMSNSRLALVIINHAFDKVLSLTWHCGILSEIRSGLMLMFGIFQLMCSLGVIVLLLPIIILDAIDLFLYMCRLLDYGCKLFHYNRSSLPVADGKEKTSGPISGKEEIVIDEEIINMLNESSESLINHTTAGLEYDISSGSVNKSRRLNSTSTVTFVKQNKLVNERREDAYYEEEDDDFLSNPNYDKISLIEKSFTSRFEVACEQKAA.

A helical membrane pass occupies residues 68-88 (FGIFQLMCSLGVIVLLLPIII). Position 177 is a phosphoserine (serine 177).

It localises to the lipid droplet. The protein resides in the membrane. This Saccharomyces cerevisiae (strain ATCC 204508 / S288c) (Baker's yeast) protein is Bypass of stop codon protein 2 (BSC2).